The following is a 307-amino-acid chain: Elongation factor Ts (307 aa).

An involved in Mg(2+) ion dislocation from EF-Tu region spans residues 79–82; the sequence is TDFV.

Belongs to the EF-Ts family.

It localises to the cytoplasm. In terms of biological role, associates with the EF-Tu.GDP complex and induces the exchange of GDP to GTP. It remains bound to the aminoacyl-tRNA.EF-Tu.GTP complex up to the GTP hydrolysis stage on the ribosome. This Bartonella bacilliformis (strain ATCC 35685 / KC583 / Herrer 020/F12,63) protein is Elongation factor Ts.